A 434-amino-acid polypeptide reads, in one-letter code: GTPase Obg (434 aa).

The region spanning 1 to 158 (MFLDTAKIKV…RELQLELKIL (158 aa)) is the Obg domain. Residues 159-336 (ADVGLVGFPS…LLDATAELLD (178 aa)) enclose the OBG-type G domain. GTP contacts are provided by residues 165–172 (GFPSVGKS), 190–194 (FTTIV), 212–215 (DLPG), 282–285 (NKMD), and 317–319 (SGL). 2 residues coordinate Mg(2+): S172 and T192. In terms of domain architecture, OCT spans 356–434 (GFDEEEKAFE…IGKFEFEFVD (79 aa)).

Belongs to the TRAFAC class OBG-HflX-like GTPase superfamily. OBG GTPase family. As to quaternary structure, monomer. Requires Mg(2+) as cofactor.

Its subcellular location is the cytoplasm. An essential GTPase which binds GTP, GDP and possibly (p)ppGpp with moderate affinity, with high nucleotide exchange rates and a fairly low GTP hydrolysis rate. Plays a role in control of the cell cycle, stress response, ribosome biogenesis and in those bacteria that undergo differentiation, in morphogenesis control. The polypeptide is GTPase Obg (Streptococcus pneumoniae (strain ATCC 700669 / Spain 23F-1)).